The sequence spans 373 residues: tRNA N6-adenosine threonylcarbamoyltransferase (373 aa).

A divalent metal cation is bound by residues His-128, His-132, and Tyr-149. Substrate is bound by residues 149-153 (YVSGG), Asp-181, Gly-196, Glu-200, and Asn-302. Asp-331 contributes to the a divalent metal cation binding site.

The protein belongs to the KAE1 / TsaD family. Component of the EKC/KEOPS complex composed of at least BUD32, CGI121, GON7, KAE1 and PCC1; the whole complex dimerizes. A divalent metal cation is required as a cofactor.

It localises to the cytoplasm. Its subcellular location is the nucleus. It carries out the reaction L-threonylcarbamoyladenylate + adenosine(37) in tRNA = N(6)-L-threonylcarbamoyladenosine(37) in tRNA + AMP + H(+). Its function is as follows. Component of the EKC/KEOPS complex that is required for the formation of a threonylcarbamoyl group on adenosine at position 37 (t(6)A37) in tRNAs that read codons beginning with adenine. The complex is probably involved in the transfer of the threonylcarbamoyl moiety of threonylcarbamoyl-AMP (TC-AMP) to the N6 group of A37. KAE1 likely plays a direct catalytic role in this reaction, but requires other protein(s) of the complex to fulfill this activity. The EKC/KEOPS complex also promotes both telomere uncapping and telomere elongation. The complex is required for efficient recruitment of transcriptional coactivators. The sequence is that of tRNA N6-adenosine threonylcarbamoyltransferase from Candida glabrata (strain ATCC 2001 / BCRC 20586 / JCM 3761 / NBRC 0622 / NRRL Y-65 / CBS 138) (Yeast).